Reading from the N-terminus, the 337-residue chain is Glucokinase (337 aa).

11 to 16 (ADIGGT) serves as a coordination point for ATP.

This sequence belongs to the bacterial glucokinase family.

The protein resides in the cytoplasm. It carries out the reaction D-glucose + ATP = D-glucose 6-phosphate + ADP + H(+). The chain is Glucokinase from Xylella fastidiosa (strain M12).